We begin with the raw amino-acid sequence, 337 residues long: MIRVAINGFGRIGRNFARCWLGRENSNIELVAVNDTSDPRTNAHLLKYDSMLGKLKNVDITADDNSITVNGKTIKCVSDRNPENLPWKEWEIDLIIESTGVFTSKEGALKHVNAGAKKVLITAPGKNEDGTFVIGVNHHDYDHNVHHIISNASCTTNCLAPIAKVLNDKFGIIKGSMTTTHSYTGDQRLLDASHRDLRRARAAAINIVPTSTGAAKAVALVIPELKGKLNGVALRVPTPNVSMVDFVVQVEKRTITEEVNQALKDASEGPLKGILDYSELQLVSSDYQGTDASSIVDASLTLVMGNDLVKVMAWYDNEWGYSQRVLDLAELVAEKWV.

Residues 11–12 (RI), Asp35, Arg80, and Thr122 each bind NADP(+). D-glyceraldehyde 3-phosphate is bound by residues 153 to 155 (SCT), Thr184, Arg199, 212 to 213 (TG), and Arg235. The Nucleophile role is filled by Cys154. Asn317 contributes to the NADP(+) binding site.

It belongs to the glyceraldehyde-3-phosphate dehydrogenase family. As to quaternary structure, homotetramer.

The protein localises to the cytoplasm. It catalyses the reaction D-glyceraldehyde 3-phosphate + phosphate + NADP(+) = (2R)-3-phospho-glyceroyl phosphate + NADPH + H(+). The enzyme catalyses D-glyceraldehyde 3-phosphate + phosphate + NAD(+) = (2R)-3-phospho-glyceroyl phosphate + NADH + H(+). It functions in the pathway carbohydrate biosynthesis; Calvin cycle. Gap2 has a major role in carbon fixation as a component of the Calvin cycle. Catalyzes the oxidative phosphorylation of glyceraldehyde 3-phosphate (G3P) to 1,3-bisphosphoglycerate (BPG) using the cofactor NAD. The first reaction step involves the formation of a hemiacetal intermediate between G3P and a cysteine residue, and this hemiacetal intermediate is then oxidized to a thioester, with concomitant reduction of NAD to NADH. The reduced NADH is then exchanged with the second NAD, and the thioester is attacked by a nucleophilic inorganic phosphate to produce BPG. This Trichormus variabilis (strain ATCC 29413 / PCC 7937) (Anabaena variabilis) protein is Glyceraldehyde-3-phosphate dehydrogenase 2 (gap2).